A 392-amino-acid chain; its full sequence is Protein O-glucosyltransferase 1 (392 aa).

Positions 1–23 (MEWWASSPLRLWLLLFLLPSAQG) are cleaved as a signal peptide. N-linked (GlcNAc...) asparagine glycans are attached at residues Asn40 and Asn53. 4 cysteine pairs are disulfide-bonded: Cys49-Cys56, Cys54-Cys357, Cys102-Cys108, and Cys263-Cys286. Residues 103 to 107 (MFPSR) form an interaction with the consensus sequence C-X-S-X-[PA]-C in peptide substrates region. The Proton donor/acceptor role is filled by Asp133. The segment at 172–178 (AVWPIYP) is interaction with the consensus sequence C-X-S-X-[PA]-C in peptide substrates. Tyr177 is a binding site for UDP-alpha-D-glucose. N-linked (GlcNAc...) asparagine glycosylation is present at Asn204. UDP-alpha-D-glucose is bound by residues Ser212, Arg218, and 274–279 (VAASFR). Residue Asn373 is glycosylated (N-linked (GlcNAc...) asparagine). Positions 389-392 (KTEL) match the Prevents secretion from ER motif.

Belongs to the glycosyltransferase 90 family. Expressed in most adult tissues at different intensities. Abundantly expressed in liver. Expressed also in brain, heart, skeletal muscle, spleen, kidney, placenta, lung and peripheral blood leukocyte. Not detectable in colon, thymus and small intestine. Expressed in the epidermis, especially in the upper parts, stratum spinosum and stratum granulosum (at protein level).

It is found in the endoplasmic reticulum lumen. The enzyme catalyses L-seryl-[EGF-like domain protein] + UDP-alpha-D-xylose = 3-O-(beta-D-xylosyl)-L-seryl-[EGF-like domain protein] + UDP + H(+). The catalysed reaction is L-seryl-[EGF-like domain protein] + UDP-alpha-D-glucose = 3-O-(beta-D-glucosyl)-L-seryl-[EGF-like domain protein] + UDP + H(+). Its pathway is protein modification; protein glycosylation. Dual specificity glycosyltransferase that catalyzes the transfer of glucose and xylose from UDP-glucose and UDP-xylose, respectively, to a serine residue found in the consensus sequence of C-X-S-X-P-C. Specifically targets extracellular EGF repeats of protein such as CRB2, F7, F9 and NOTCH2. Acts as a positive regulator of Notch signaling by mediating O-glucosylation of Notch, leading to regulate muscle development. Notch glucosylation does not affect Notch ligand binding. Required during early development to promote gastrulation: acts by mediating O-glucosylation of CRB2, which is required for CRB2 localization to the cell membrane. This is Protein O-glucosyltransferase 1 from Homo sapiens (Human).